We begin with the raw amino-acid sequence, 159 residues long: Phosphopantetheine adenylyltransferase (159 aa).

A substrate-binding site is contributed by serine 9. Residues 9 to 10 and histidine 17 each bind ATP; that span reads SF. 3 residues coordinate substrate: lysine 41, leucine 73, and lysine 87. ATP contacts are provided by residues 88–90, glutamate 98, and 123–129; these read GLR and NIHISSS.

Belongs to the bacterial CoaD family. Homohexamer. It depends on Mg(2+) as a cofactor.

The protein localises to the cytoplasm. It carries out the reaction (R)-4'-phosphopantetheine + ATP + H(+) = 3'-dephospho-CoA + diphosphate. It functions in the pathway cofactor biosynthesis; coenzyme A biosynthesis; CoA from (R)-pantothenate: step 4/5. In terms of biological role, reversibly transfers an adenylyl group from ATP to 4'-phosphopantetheine, yielding dephospho-CoA (dPCoA) and pyrophosphate. The sequence is that of Phosphopantetheine adenylyltransferase from Clostridium beijerinckii (strain ATCC 51743 / NCIMB 8052) (Clostridium acetobutylicum).